The sequence spans 567 residues: Proline--tRNA ligase (567 aa).

It belongs to the class-II aminoacyl-tRNA synthetase family. ProS type 1 subfamily. In terms of assembly, homodimer.

Its subcellular location is the cytoplasm. It carries out the reaction tRNA(Pro) + L-proline + ATP = L-prolyl-tRNA(Pro) + AMP + diphosphate. Its function is as follows. Catalyzes the attachment of proline to tRNA(Pro) in a two-step reaction: proline is first activated by ATP to form Pro-AMP and then transferred to the acceptor end of tRNA(Pro). As ProRS can inadvertently accommodate and process non-cognate amino acids such as alanine and cysteine, to avoid such errors it has two additional distinct editing activities against alanine. One activity is designated as 'pretransfer' editing and involves the tRNA(Pro)-independent hydrolysis of activated Ala-AMP. The other activity is designated 'posttransfer' editing and involves deacylation of mischarged Ala-tRNA(Pro). The misacylated Cys-tRNA(Pro) is not edited by ProRS. The polypeptide is Proline--tRNA ligase (Campylobacter curvus (strain 525.92)).